Reading from the N-terminus, the 395-residue chain is Protein HIGH CHLOROPHYLL FLUORESCENCE PHENOTYPE 244, chloroplastic (395 aa).

The transit peptide at 1–64 directs the protein to the chloroplast; that stretch reads MASLRLPAQL…ERSIVVPVTC (64 aa).

It belongs to the NmrA-type oxidoreductase family. Component of a high molecular weight complex containing OHP1, OHP2 and HCF244, and PSII core proteins D1/D2, HCF136 and HCF173. Interacts with OHP1. Forms a trimeric complex with OHP1 and OHP2 that mutually stabilizes each subunit.

The protein localises to the plastid. Its subcellular location is the chloroplast stroma. It is found in the chloroplast thylakoid membrane. Auxiliary factor required, together with HCF173, for the biogenesis of photosystem II (PSII), especially for the synthesis of the reaction center proteins (e.g. D1), via the regulation of the corresponding mRNA (e.g. psbA) translation initiation (ribosomal loading) and stabilization. Forms a trimeric complex with OHP1 and OHP2 that is required to promote PSII core subunit assembly. The trimeric complex forms a transient PSII reaction center-like complex with PsbA, PsbD, PsbE, PsbF and PsbI subunits in thylakoids for early assembly of PSII as well as PSII repair. The trimeric complex is required for the recruitment of ribosomes to the psbA mRNA during PSII biogenesis and repair. The chain is Protein HIGH CHLOROPHYLL FLUORESCENCE PHENOTYPE 244, chloroplastic from Arabidopsis thaliana (Mouse-ear cress).